Here is a 61-residue protein sequence, read N- to C-terminus: Small ribosomal subunit protein uS14 (61 aa).

Residues Cys24, Cys27, Cys40, and Cys43 each contribute to the Zn(2+) site.

The protein belongs to the universal ribosomal protein uS14 family. Zinc-binding uS14 subfamily. As to quaternary structure, part of the 30S ribosomal subunit. Contacts proteins S3 and S10. The cofactor is Zn(2+).

Its function is as follows. Binds 16S rRNA, required for the assembly of 30S particles and may also be responsible for determining the conformation of the 16S rRNA at the A site. This chain is Small ribosomal subunit protein uS14, found in Geobacter sp. (strain M21).